A 339-amino-acid chain; its full sequence is Transcription initiation factor IIB (339 aa).

The TFIIB-type zinc-finger motif lies at 39 to 70; that stretch reads EELICPVCGSKNIIKDYERAEIVCEMCGCVLQ. Residues Cys43, Cys46, Cys62, and Cys65 each coordinate Zn(2+). 2 repeat units span residues 156–239 and 250–331.

The protein belongs to the TFIIB family.

Stabilizes TBP binding to an archaeal box-A promoter. Also responsible for recruiting RNA polymerase II to the pre-initiation complex (DNA-TBP-TFIIB). In Methanococcus maripaludis (strain C7 / ATCC BAA-1331), this protein is Transcription initiation factor IIB.